Reading from the N-terminus, the 339-residue chain is Ketol-acid reductoisomerase (NADP(+)) (339 aa).

The 182-residue stretch at 1 to 182 (MRVYYDRDAD…GGGRSGIIET (182 aa)) folds into the KARI N-terminal Rossmann domain. NADP(+) contacts are provided by residues 24–27 (YGSQ), Arg48, Ser51, Ser53, and 83–86 (DELQ). The active site involves His108. Gly134 contributes to the NADP(+) binding site. The KARI C-terminal knotted domain occupies 183 to 328 (TFREECETDL…EKLRGMMPWI (146 aa)). Mg(2+)-binding residues include Asp191, Glu195, Glu227, and Glu231. Ser252 is a binding site for substrate.

It belongs to the ketol-acid reductoisomerase family. Mg(2+) serves as cofactor.

The enzyme catalyses (2R)-2,3-dihydroxy-3-methylbutanoate + NADP(+) = (2S)-2-acetolactate + NADPH + H(+). The catalysed reaction is (2R,3R)-2,3-dihydroxy-3-methylpentanoate + NADP(+) = (S)-2-ethyl-2-hydroxy-3-oxobutanoate + NADPH + H(+). It functions in the pathway amino-acid biosynthesis; L-isoleucine biosynthesis; L-isoleucine from 2-oxobutanoate: step 2/4. It participates in amino-acid biosynthesis; L-valine biosynthesis; L-valine from pyruvate: step 2/4. In terms of biological role, involved in the biosynthesis of branched-chain amino acids (BCAA). Catalyzes an alkyl-migration followed by a ketol-acid reduction of (S)-2-acetolactate (S2AL) to yield (R)-2,3-dihydroxy-isovalerate. In the isomerase reaction, S2AL is rearranged via a Mg-dependent methyl migration to produce 3-hydroxy-3-methyl-2-ketobutyrate (HMKB). In the reductase reaction, this 2-ketoacid undergoes a metal-dependent reduction by NADPH to yield (R)-2,3-dihydroxy-isovalerate. The sequence is that of Ketol-acid reductoisomerase (NADP(+)) from Magnetospirillum molischianum (Rhodospirillum molischianum).